The following is a 426-amino-acid chain: Histidine--tRNA ligase (426 aa).

Belongs to the class-II aminoacyl-tRNA synthetase family. Homodimer.

The protein localises to the cytoplasm. The catalysed reaction is tRNA(His) + L-histidine + ATP = L-histidyl-tRNA(His) + AMP + diphosphate + H(+). In Pseudoalteromonas atlantica (strain T6c / ATCC BAA-1087), this protein is Histidine--tRNA ligase.